Reading from the N-terminus, the 280-residue chain is Probable endonuclease 4 (280 aa).

9 residues coordinate Zn(2+): histidine 69, histidine 109, glutamate 145, aspartate 179, histidine 182, histidine 216, aspartate 229, histidine 231, and glutamate 261.

This sequence belongs to the AP endonuclease 2 family. Requires Zn(2+) as cofactor.

It catalyses the reaction Endonucleolytic cleavage to 5'-phosphooligonucleotide end-products.. In terms of biological role, endonuclease IV plays a role in DNA repair. It cleaves phosphodiester bonds at apurinic or apyrimidinic (AP) sites, generating a 3'-hydroxyl group and a 5'-terminal sugar phosphate. This is Probable endonuclease 4 from Pelodictyon phaeoclathratiforme (strain DSM 5477 / BU-1).